Reading from the N-terminus, the 160-residue chain is MAPK regulated corepressor interacting protein 2 (160 aa).

At methionine 1 the chain carries N-acetylmethionine. The segment at 1-22 is disordered; it reads MYTITKGPSKLVAQRRTGPTQQ. Residue arginine 35 is modified to Omega-N-methylarginine. A disordered region spans residues 43–64; that stretch reads LPAHLQPSAQTQGPWPLASSGP. A Phosphoserine modification is found at serine 61. At arginine 65 the chain carries Omega-N-methylarginine. Serine 82 is modified (phosphoserine).

The protein belongs to the MCRIP family. Interacts with DDX6. Interacts with MCRIP1.

The protein localises to the cytoplasm. The protein resides in the stress granule. Its subcellular location is the nucleus. The protein is MAPK regulated corepressor interacting protein 2 (Mcrip2) of Mus musculus (Mouse).